Reading from the N-terminus, the 259-residue chain is Protein-L-isoaspartate O-methyltransferase 1 (259 aa).

Ser109 is an active-site residue.

The protein belongs to the methyltransferase superfamily. L-isoaspartyl/D-aspartyl protein methyltransferase family.

The protein resides in the cytoplasm. The enzyme catalyses [protein]-L-isoaspartate + S-adenosyl-L-methionine = [protein]-L-isoaspartate alpha-methyl ester + S-adenosyl-L-homocysteine. In terms of biological role, catalyzes the methyl esterification of L-isoaspartyl residues in peptides and proteins that result from spontaneous decomposition of normal L-aspartyl and L-asparaginyl residues. It plays a role in the repair and/or degradation of damaged proteins. In Cupriavidus necator (strain ATCC 17699 / DSM 428 / KCTC 22496 / NCIMB 10442 / H16 / Stanier 337) (Ralstonia eutropha), this protein is Protein-L-isoaspartate O-methyltransferase 1.